A 224-amino-acid chain; its full sequence is Response regulator protein GraR (224 aa).

Residues 2–115 (QILLVEDDNT…VLIAKLQAIY (114 aa)) form the Response regulatory domain. Position 51 is a 4-aspartylphosphate (Asp-51). Residues 126 to 224 (KRTLSWQDAT…KVGKGYLAHE (99 aa)) constitute a DNA-binding region (ompR/PhoB-type).

Post-translationally, phosphorylated by GraS.

It localises to the cytoplasm. Its function is as follows. Member of the two-component regulatory system GraR/GraS involved in resistance against cationic antimicrobial peptides (CAMPs). The protein is Response regulator protein GraR (graR) of Staphylococcus epidermidis (strain ATCC 35984 / DSM 28319 / BCRC 17069 / CCUG 31568 / BM 3577 / RP62A).